The sequence spans 360 residues: MKASIISKLESLKERHEELEALLGESSVINDQDKFRAYSKEYAQLEDVVKCFARWNWLNNNIEETQLLLDDPDMKEMAELEIEESKAEIENAEQQLQILLLPKDPNDEYNAYLEIRAGTGGDEAGIFAGDLFRMYSRYAESKRWRVEVLNANESEQGGYKEIIVKVNGEGVYGQLKFESGGHRVQRVPKTESQGRIHTSACTVAVMPELPENEMPEINPSDLRIDTYRSSGAGGQHVNTTDSAVRITHIPTGIVVECQDERSQHKNKAKALSVLASRIAQAEQERQAQAQADTRRNLLGSGDRSDKIRTYNYPQGRVTDHRINLTVYRLDEVMNGKIDELIQPIITEYQADQLAMLSEQN.

Position 235 is an N5-methylglutamine (Gln-235). Residues Gln-286–Asn-311 are disordered.

The protein belongs to the prokaryotic/mitochondrial release factor family. Methylated by PrmC. Methylation increases the termination efficiency of RF1.

It localises to the cytoplasm. In terms of biological role, peptide chain release factor 1 directs the termination of translation in response to the peptide chain termination codons UAG and UAA. The polypeptide is Peptide chain release factor 1 (Histophilus somni (strain 2336) (Haemophilus somnus)).